Here is a 311-residue protein sequence, read N- to C-terminus: Putative ribose-phosphate pyrophosphokinase 2 (311 aa).

Residues Asp-38–Glu-40 and Arg-97–Gln-98 contribute to the ATP site. Mg(2+)-binding residues include His-131 and Asp-171. Asp-219 lines the D-ribose 5-phosphate pocket.

The protein belongs to the ribose-phosphate pyrophosphokinase family. Class I subfamily. In terms of assembly, homohexamer. Requires Mg(2+) as cofactor.

It is found in the cytoplasm. It carries out the reaction D-ribose 5-phosphate + ATP = 5-phospho-alpha-D-ribose 1-diphosphate + AMP + H(+). It participates in metabolic intermediate biosynthesis; 5-phospho-alpha-D-ribose 1-diphosphate biosynthesis; 5-phospho-alpha-D-ribose 1-diphosphate from D-ribose 5-phosphate (route I): step 1/1. Functionally, involved in the biosynthesis of the central metabolite phospho-alpha-D-ribosyl-1-pyrophosphate (PRPP) via the transfer of pyrophosphoryl group from ATP to 1-hydroxyl of ribose-5-phosphate (Rib-5-P). This chain is Putative ribose-phosphate pyrophosphokinase 2, found in Listeria innocua serovar 6a (strain ATCC BAA-680 / CLIP 11262).